The chain runs to 423 residues: Probable sucrose-phosphate synthase (423 aa).

It belongs to the glycosyltransferase 1 family.

It catalyses the reaction beta-D-fructose 6-phosphate + UDP-alpha-D-glucose = sucrose 6(F)-phosphate + UDP + H(+). In terms of biological role, plays a role in sucrose synthesis by catalyzing the first step of sucrose biosynthesis from UDP-glucose and fructose-6-phosphate. This is Probable sucrose-phosphate synthase from Thermosipho melanesiensis (strain DSM 12029 / CIP 104789 / BI429).